Here is a 231-residue protein sequence, read N- to C-terminus: MAKLGKRLVGIREKLEPGKLYPVEEALNLLKEVAKVKFEESVDVAVNLGVDPRKSDQVVRGSTVLPNGLGKTVRVGVFTQGVNAEAAKNAGADVVGLEDLAETVKSGQIDFDVIIASPDAMRVVGQLGPILGPRGLMPNPKVGTVTTDVAGAVTKAKAGQVRYRTDKAGIIHCSIGKTSFEVDALKQNLRALVEDLGKLKPASAKGIYLKKLTLSTTMGPGIAVDQASLPV.

It belongs to the universal ribosomal protein uL1 family. Part of the 50S ribosomal subunit.

In terms of biological role, binds directly to 23S rRNA. The L1 stalk is quite mobile in the ribosome, and is involved in E site tRNA release. Protein L1 is also a translational repressor protein, it controls the translation of the L11 operon by binding to its mRNA. In Nitrosococcus oceani (strain ATCC 19707 / BCRC 17464 / JCM 30415 / NCIMB 11848 / C-107), this protein is Large ribosomal subunit protein uL1.